Consider the following 449-residue polypeptide: 8-oxoguanine deaminase (449 aa).

Zn(2+)-binding residues include His-64 and His-66. Gln-69 lines the substrate pocket. His-232 serves as a coordination point for Zn(2+). Residues Glu-235 and His-269 each coordinate substrate. Positions 269 and 320 each coordinate Zn(2+).

This sequence belongs to the metallo-dependent hydrolases superfamily. ATZ/TRZ family. As to quaternary structure, homodimer. Requires Zn(2+) as cofactor.

It carries out the reaction 8-oxoguanine + H2O + H(+) = urate + NH4(+). It participates in purine metabolism. Specifically deaminates 8-Oxoguanine (8-oxoG) to uric acid. 8-oxoG is formed via the oxidation of guanine within DNA by reactive oxygen species and leads, if uncorrected, to the incorporation of 8-oxoG:A mismatches and eventually to G:C to T:A transversions. In Pseudomonas aeruginosa (strain ATCC 15692 / DSM 22644 / CIP 104116 / JCM 14847 / LMG 12228 / 1C / PRS 101 / PAO1), this protein is 8-oxoguanine deaminase.